The chain runs to 143 residues: Large ribosomal subunit protein uL13 (143 aa).

This sequence belongs to the universal ribosomal protein uL13 family. In terms of assembly, part of the 50S ribosomal subunit.

Its function is as follows. This protein is one of the early assembly proteins of the 50S ribosomal subunit, although it is not seen to bind rRNA by itself. It is important during the early stages of 50S assembly. The sequence is that of Large ribosomal subunit protein uL13 from Carboxydothermus hydrogenoformans (strain ATCC BAA-161 / DSM 6008 / Z-2901).